Reading from the N-terminus, the 127-residue chain is Small ribosomal subunit protein uS11 (127 aa).

It belongs to the universal ribosomal protein uS11 family. Part of the 30S ribosomal subunit. Interacts with proteins S7 and S18. Binds to IF-3.

Functionally, located on the platform of the 30S subunit, it bridges several disparate RNA helices of the 16S rRNA. Forms part of the Shine-Dalgarno cleft in the 70S ribosome. In Rickettsia rickettsii (strain Iowa), this protein is Small ribosomal subunit protein uS11.